The primary structure comprises 906 residues: MPLRLDIKRKLTARSDRVKSVDLHPTEPWMLASLYNGSVCVWNHETQTLVKTFEVCDLPVRAAKFVARKNWVVTGADDMQIRVFNYNTLERVHMFEAHSDYIRCIAVHPTQPFILTSSDDMLIKLWDWDKKWSCSQVFEGHTHYVMQIVINPKDNNQFASASLDRTIKVWQLGSSSPNFTLEGHEKGVNCIDYYSGGDKPYLISGADDRLVKIWDYQNKTCVQTLEGHAQNVSCASFHPELPIIITGSEDGTVRIWHSSTYRLESTLNYGMERVWCVASLRGSNNVALGYDEGSIIVKLGREEPAMSMDANGKIIWAKHSEVQQANLKAMGDAEIKDGERLPLAVKDMGSCEIYPQTIQHNPNGRFVVVCGDGEYIIYTAMALRNKSFGSAQEFAWAHDSSEYAIRESNSIVKIFKNFKEKKSFKPDFGAESIYGGFLLGVRSVNGLAFYDWDNTELIRRIEIQPKHIFWSDSGELVCIATEESFFILKYLSEKVLAVQETHEGVTEDGIEDAFEVLGEIQEIVKTGLWVGDCFIYTSSVNRLNYYVGGEIVTIAHLDRTMYLLGYIPKDNRLYLGDKELNIVSYSLLVSVLEYQTAVMRRDFSMADKVLPTIPKEQRTRVAHFLEKQGFKQQALTVSTDPEHRFELALQLGELKIAYQLAVEAESEQKWKQLAELAISKCQFGLAQECLHHAQDYGGLLLLATASGNANMVNKLAEGAERDGKNNVAFMSYFLQGKVDACLELLIRTGRLPEAAFLARTYLPSQVSRVVKLWRENLSKVNQKAAESLADPTEYENLFPGLKEAFVVEEWVKETHAELWPAKQYPLVTPNEERNVMEEAKGFQPSRSTAQQELDGKPASPTPVIVASHTANKEEKSLLELEVDLDNLELVDIDTTDINLDEDILDD.

8 WD repeats span residues 13 to 52 (ARSD…LVKT), 55 to 94 (VCDL…RVHM), 97 to 136 (AHSD…SCSQ), 140 to 180 (GHTH…PNFT), 183 to 224 (GHEK…CVQT), 227 to 266 (GHAQ…LEST), 350 to 388 (SCEI…NKSF), and 390 to 425 (SAQE…KSFK). Lys-627 carries the post-translational modification N6-acetyllysine. One copy of the WD 9 repeat lies at 746–783 (IRTGRLPEAAFLARTYLPSQVSRVVKLWRENLSKVNQK). The interval 837 to 863 (EEAKGFQPSRSTAQQELDGKPASPTPV) is disordered. Ser-859 carries the post-translational modification Phosphoserine. A Phosphothreonine modification is found at Thr-861. Positions 866-890 (ASHTANKEEKSLLELEVDLDNLELV) form a coiled coil.

This sequence belongs to the WD repeat COPB2 family. As to quaternary structure, oligomeric complex that consists of at least the alpha, beta, beta', gamma, delta, epsilon and zeta subunits. Probably interacts with PEX11A. Interacts with SCYL1. Interacts with JAGN1.

The protein resides in the cytoplasm. It localises to the cytosol. Its subcellular location is the golgi apparatus membrane. It is found in the cytoplasmic vesicle. The protein localises to the COPI-coated vesicle membrane. The coatomer is a cytosolic protein complex that binds to dilysine motifs and reversibly associates with Golgi non-clathrin-coated vesicles, which further mediate biosynthetic protein transport from the ER, via the Golgi up to the trans Golgi network. Coatomer complex is required for budding from Golgi membranes, and is essential for the retrograde Golgi-to-ER transport of dilysine-tagged proteins. In mammals, the coatomer can only be recruited by membranes associated to ADP-ribosylation factors (ARFs), which are small GTP-binding proteins; the complex also influences the Golgi structural integrity, as well as the processing, activity, and endocytic recycling of LDL receptors. Functionally, this coatomer complex protein, essential for Golgi budding and vesicular trafficking, is a selective binding protein (RACK) for protein kinase C, epsilon type. It binds to Golgi membranes in a GTP-dependent manner. The sequence is that of Coatomer subunit beta' (COPB2) from Pongo abelii (Sumatran orangutan).